Reading from the N-terminus, the 417-residue chain is Serine hydroxymethyltransferase (417 aa).

Residues Leu119 and 123–125 each bind (6S)-5,6,7,8-tetrahydrofolate; that span reads GHL. Position 227 is an N6-(pyridoxal phosphate)lysine (Lys227).

The protein belongs to the SHMT family. In terms of assembly, homodimer. It depends on pyridoxal 5'-phosphate as a cofactor.

The protein resides in the cytoplasm. It catalyses the reaction (6R)-5,10-methylene-5,6,7,8-tetrahydrofolate + glycine + H2O = (6S)-5,6,7,8-tetrahydrofolate + L-serine. It functions in the pathway one-carbon metabolism; tetrahydrofolate interconversion. The protein operates within amino-acid biosynthesis; glycine biosynthesis; glycine from L-serine: step 1/1. In terms of biological role, catalyzes the reversible interconversion of serine and glycine with tetrahydrofolate (THF) serving as the one-carbon carrier. This reaction serves as the major source of one-carbon groups required for the biosynthesis of purines, thymidylate, methionine, and other important biomolecules. Also exhibits THF-independent aldolase activity toward beta-hydroxyamino acids, producing glycine and aldehydes, via a retro-aldol mechanism. The polypeptide is Serine hydroxymethyltransferase (Buchnera aphidicola subsp. Cinara cedri (strain Cc)).